Reading from the N-terminus, the 713-residue chain is Phosphoribosylformylglycinamidine synthase subunit PurL (713 aa).

Residue His-34 is part of the active site. Residues Tyr-37 and Arg-73 each contribute to the ATP site. Glu-75 serves as a coordination point for Mg(2+). Substrate is bound by residues 76–79 and Arg-98; that span reads SHNH. The Proton acceptor role is filled by His-77. Residue Asp-99 coordinates Mg(2+). Residue Gln-221 participates in substrate binding. Residue Asp-249 participates in Mg(2+) binding. A substrate-binding site is contributed by 292–294; that stretch reads ESQ. ATP contacts are provided by Asp-474 and Gly-511. Ser-514 contributes to the substrate binding site.

The protein belongs to the FGAMS family. As to quaternary structure, monomer. Part of the FGAM synthase complex composed of 1 PurL, 1 PurQ and 2 PurS subunits.

It is found in the cytoplasm. It catalyses the reaction N(2)-formyl-N(1)-(5-phospho-beta-D-ribosyl)glycinamide + L-glutamine + ATP + H2O = 2-formamido-N(1)-(5-O-phospho-beta-D-ribosyl)acetamidine + L-glutamate + ADP + phosphate + H(+). The protein operates within purine metabolism; IMP biosynthesis via de novo pathway; 5-amino-1-(5-phospho-D-ribosyl)imidazole from N(2)-formyl-N(1)-(5-phospho-D-ribosyl)glycinamide: step 1/2. Its function is as follows. Part of the phosphoribosylformylglycinamidine synthase complex involved in the purines biosynthetic pathway. Catalyzes the ATP-dependent conversion of formylglycinamide ribonucleotide (FGAR) and glutamine to yield formylglycinamidine ribonucleotide (FGAM) and glutamate. The FGAM synthase complex is composed of three subunits. PurQ produces an ammonia molecule by converting glutamine to glutamate. PurL transfers the ammonia molecule to FGAR to form FGAM in an ATP-dependent manner. PurS interacts with PurQ and PurL and is thought to assist in the transfer of the ammonia molecule from PurQ to PurL. This Ignicoccus hospitalis (strain KIN4/I / DSM 18386 / JCM 14125) protein is Phosphoribosylformylglycinamidine synthase subunit PurL.